Here is a 269-residue protein sequence, read N- to C-terminus: LOB domain-containing protein 6 (269 aa).

An LOB domain is found at 37-138 (SPCAACKFLR…QDLARAKFEL (102 aa)).

The protein belongs to the LOB domain-containing protein family.

Its subcellular location is the nucleus. In terms of biological role, negative regulator of cell proliferation in the adaxial side of leaves. Regulates the formation of a symmetric lamina and the establishment of venation. The sequence is that of LOB domain-containing protein 6 (LBD6) from Oryza sativa subsp. indica (Rice).